Consider the following 130-residue polypeptide: Small ribosomal subunit protein uS9 (130 aa).

It belongs to the universal ribosomal protein uS9 family.

The protein is Small ribosomal subunit protein uS9 of Stutzerimonas stutzeri (strain A1501) (Pseudomonas stutzeri).